The sequence spans 819 residues: Zinc finger protein 27 (819 aa).

The region spanning 1–75 (MDVTIDFSRE…KTLGAESCHD (75 aa)) is the KRAB domain. Residues 93–123 (PKRPRHWDPPEDEPKHSSDLQTHDESNGLKR) are disordered. The span at 98 to 120 (HWDPPEDEPKHSSDLQTHDESNG) shows a compositional bias: basic and acidic residues. C2H2-type zinc fingers lie at residues 205–227 (YVCVECGKACSQTSEFLTHQKTH), 233–255 (YKCGDCGKSFFQVSSLFRHRRIH), 261–283 (YDCSHCGKGFSYNSDLRIHQKIH), 289–311 (HGCVDCGKAFTQKSTLRMHQKIH), 317–339 (YVCIECGQAFIQKTHLVAHRRIH), 345–367 (YACDGCGKAFLSKSQLLVHQRIH), 401–423 (SICAECGKAFTYRSELIIHQRTH), 429–451 (YQCGDCGKAFTQKSALTVHRRIH), 457–479 (YVCVKCGLAFVQRAHLDAHQVIH), 485–507 (YQCGHCGKFFTSKSQLHVHKRIH), 513–535 (YVCSNCGKAFANRSNLITHQKTH), 541–563 (YVCARCGKAFTQRSDLVTHQRIH), 569–591 (YGCSTCGKAFTQKSHLSIHEKIH), 597–619 (YGCRDCGKAFNQKSILIVHQKIH), 625–647 (HVCAECGRAFIRKSNFITHQRIH), 653–675 (YGCTDCGKSFTSKSQLLVHRPIH), 681–703 (YVCAECGKAFSGRSNLSKHQKTH), 709–731 (YACSECGKSFRQKSELITHHRIH), 737–759 (YDCGDCGKSFTKKSQLQVHQRIH), 765–787 (YRCAECGKAFTDRSNLNKHQTTH), and 793–815 (YKCVVCGKGFVQKSVLSIHENVH).

Belongs to the krueppel C2H2-type zinc-finger protein family.

The protein resides in the nucleus. May be involved in transcriptional regulation. The protein is Zinc finger protein 27 (Zfp27) of Mus musculus (Mouse).